A 341-amino-acid polypeptide reads, in one-letter code: Elongation factor Ts (341 aa).

Positions 80–83 (TDFV) are involved in Mg(2+) ion dislocation from EF-Tu.

Belongs to the EF-Ts family.

The protein localises to the cytoplasm. Functionally, associates with the EF-Tu.GDP complex and induces the exchange of GDP to GTP. It remains bound to the aminoacyl-tRNA.EF-Tu.GTP complex up to the GTP hydrolysis stage on the ribosome. The sequence is that of Elongation factor Ts from Lactobacillus johnsonii (strain CNCM I-12250 / La1 / NCC 533).